Here is a 436-residue protein sequence, read N- to C-terminus: 3-ketoacyl-CoA thiolase (436 aa).

The active-site Acyl-thioester intermediate is Cys-99. Catalysis depends on proton acceptor residues His-392 and Cys-422.

This sequence belongs to the thiolase-like superfamily. Thiolase family. Heterotetramer of two alpha chains (FadJ) and two beta chains (FadI).

It is found in the cytoplasm. It carries out the reaction an acyl-CoA + acetyl-CoA = a 3-oxoacyl-CoA + CoA. The protein operates within lipid metabolism; fatty acid beta-oxidation. Functionally, catalyzes the final step of fatty acid oxidation in which acetyl-CoA is released and the CoA ester of a fatty acid two carbons shorter is formed. The sequence is that of 3-ketoacyl-CoA thiolase from Shigella flexneri.